The chain runs to 175 residues: NADH-ubiquinone oxidoreductase chain 6 (175 aa).

5 helical membrane passes run 1–21, 25–45, 48–68, 88–108, and 149–169; these read MMTYIAFILSTILVVSFVGFS, SPIYGGLGLIVSGGVGCGIVL, GGSFLGLMVFLIYLGGMLVVF, TVLSLFVLGFMAELLFAGYCI, and YGTWLVIVTGWSLVIGVLVVM.

Belongs to the complex I subunit 6 family. As to quaternary structure, core subunit of respiratory chain NADH dehydrogenase (Complex I) which is composed of 45 different subunits.

It localises to the mitochondrion inner membrane. It catalyses the reaction a ubiquinone + NADH + 5 H(+)(in) = a ubiquinol + NAD(+) + 4 H(+)(out). Its function is as follows. Core subunit of the mitochondrial membrane respiratory chain NADH dehydrogenase (Complex I) which catalyzes electron transfer from NADH through the respiratory chain, using ubiquinone as an electron acceptor. Essential for the catalytic activity and assembly of complex I. This Urotrichus talpoides (Japanese shrew mole) protein is NADH-ubiquinone oxidoreductase chain 6 (MT-ND6).